The primary structure comprises 244 residues: 1-(5-phosphoribosyl)-5-[(5-phosphoribosylamino)methylideneamino] imidazole-4-carboxamide isomerase (244 aa).

D10 functions as the Proton acceptor in the catalytic mechanism. Residue D132 is the Proton donor of the active site.

The protein belongs to the HisA/HisF family.

Its subcellular location is the cytoplasm. The catalysed reaction is 1-(5-phospho-beta-D-ribosyl)-5-[(5-phospho-beta-D-ribosylamino)methylideneamino]imidazole-4-carboxamide = 5-[(5-phospho-1-deoxy-D-ribulos-1-ylimino)methylamino]-1-(5-phospho-beta-D-ribosyl)imidazole-4-carboxamide. It functions in the pathway amino-acid biosynthesis; L-histidine biosynthesis; L-histidine from 5-phospho-alpha-D-ribose 1-diphosphate: step 4/9. The protein is 1-(5-phosphoribosyl)-5-[(5-phosphoribosylamino)methylideneamino] imidazole-4-carboxamide isomerase of Xanthomonas axonopodis pv. citri (strain 306).